The primary structure comprises 198 residues: MTAMRNAEVSRNTLETKIAVAINLDGTGISRLNSGVGFFDHMLDQIARHGMMDISVECQGDLHIDAHHTVEDVGIALGQAFSKALGDKKGIRRYAHAYVPLDEALSRVVLDISGRPGLEFNVEFTRARIGEFDVDLVSEFFQGFVNHAAITLHIDNLRGKNAHHQAETIFKAFGRALRAAVELDPRMVGIMPSTKGSL.

It belongs to the imidazoleglycerol-phosphate dehydratase family.

The protein localises to the cytoplasm. The enzyme catalyses D-erythro-1-(imidazol-4-yl)glycerol 3-phosphate = 3-(imidazol-4-yl)-2-oxopropyl phosphate + H2O. It functions in the pathway amino-acid biosynthesis; L-histidine biosynthesis; L-histidine from 5-phospho-alpha-D-ribose 1-diphosphate: step 6/9. The protein is Imidazoleglycerol-phosphate dehydratase of Methylobacillus flagellatus (strain ATCC 51484 / DSM 6875 / VKM B-1610 / KT).